The following is a 1375-amino-acid chain: DNA-directed RNA polymerase subunit beta (1375 aa).

It belongs to the RNA polymerase beta chain family. In terms of assembly, the RNAP catalytic core consists of 2 alpha, 1 beta, 1 beta' and 1 omega subunit. When a sigma factor is associated with the core the holoenzyme is formed, which can initiate transcription.

The catalysed reaction is RNA(n) + a ribonucleoside 5'-triphosphate = RNA(n+1) + diphosphate. Functionally, DNA-dependent RNA polymerase catalyzes the transcription of DNA into RNA using the four ribonucleoside triphosphates as substrates. The chain is DNA-directed RNA polymerase subunit beta from Coxiella burnetii (strain CbuG_Q212) (Coxiella burnetii (strain Q212)).